The primary structure comprises 333 residues: D-fructose 1,6-bisphosphatase class 2/sedoheptulose 1,7-bisphosphatase (333 aa).

D33, E57, D85, and E88 together coordinate Mn(2+). Substrate contacts are provided by residues 88–90 (EGT), Y119, 164–166 (RTR), and 186–188 (DGD). E213 contacts Mn(2+).

This sequence belongs to the FBPase class 2 family. Homotetramer. Requires Mn(2+) as cofactor.

The enzyme catalyses beta-D-fructose 1,6-bisphosphate + H2O = beta-D-fructose 6-phosphate + phosphate. It catalyses the reaction D-sedoheptulose 1,7-bisphosphate + H2O = D-sedoheptulose 7-phosphate + phosphate. The protein operates within carbohydrate biosynthesis; Calvin cycle. Catalyzes the hydrolysis of fructose 1,6-bisphosphate (Fru 1,6-P2) and sedoheptulose 1,7-bisphosphate (Sed 1,7-P2) to fructose 6-phosphate and sedoheptulose 7-phosphate, respectively. The protein is D-fructose 1,6-bisphosphatase class 2/sedoheptulose 1,7-bisphosphatase of Prochlorococcus marinus (strain MIT 9312).